The following is a 258-amino-acid chain: Trypsin eta (258 aa).

A signal peptide spans 1–22; that stretch reads MNKVILRILALLFLLGIGAVSA. A propeptide spans 23-27 (activation peptide); the sequence is QPDGR. The 231-residue stretch at 28-258 folds into the Peptidase S1 domain; sequence IVGGADTTNY…YFKDWIASRV (231 aa). C59 and C75 are oxidised to a cystine. Catalysis depends on charge relay system residues H74 and D120. Disulfide bonds link C185-C200 and C211-C235. Residue S215 is the Charge relay system of the active site.

Belongs to the peptidase S1 family.

It localises to the secreted. Its subcellular location is the extracellular space. The enzyme catalyses Preferential cleavage: Arg-|-Xaa, Lys-|-Xaa.. In Drosophila erecta (Fruit fly), this protein is Trypsin eta (etaTry).